The sequence spans 155 residues: Probable Brix domain-containing ribosomal biogenesis protein (155 aa).

Residues Met1–Glu155 enclose the Brix domain.

Probably involved in the biogenesis of the ribosome. The polypeptide is Probable Brix domain-containing ribosomal biogenesis protein (Methanothermobacter thermautotrophicus (strain ATCC 29096 / DSM 1053 / JCM 10044 / NBRC 100330 / Delta H) (Methanobacterium thermoautotrophicum)).